A 204-amino-acid polypeptide reads, in one-letter code: High frequency lysogenization protein HflD homolog (204 aa).

Belongs to the HflD family.

It is found in the cytoplasm. The protein localises to the cell inner membrane. This chain is High frequency lysogenization protein HflD homolog, found in Actinobacillus succinogenes (strain ATCC 55618 / DSM 22257 / CCUG 43843 / 130Z).